The chain runs to 507 residues: Phosphoprotein (507 aa).

Residues 1 to 48 form an interaction with N0 region; it reads MAEEQARHVKNGLECIRALKAEPIGSLAIGEAMAAWSEISDNPGQEQA. 4 disordered regions span residues 40 to 98, 134 to 174, 201 to 231, and 251 to 305; these read SDNP…FPSR, GLDG…APIS, NNFP…IKKG, and ATQC…KGGD. A Phosphoserine modification is found at Ser-86. Low complexity predominate over residues 134-145; that stretch reads GLDGDSTLSGGD. A compositionally biased stretch (acidic residues) spans 146 to 160; the sequence is NESENSDVDIGEPDT. Residue Ser-151 is modified to Phosphoserine. Positions 260 to 270 are enriched in low complexity; sequence SEPSGPGAPAG. Residues 279–300 show a composition bias toward polar residues; that stretch reads AALTQEWTPESGTTISPRSQNK. Positions 304 to 376 are multimerization; that stretch reads GDYYDDELFS…LSSIMIAIPG (73 aa). Interaction with the L polymerase stretches follow at residues 361-377 and 396-410; these read STLE…IPGL and PIIG…AEVL. The interval 457-507 is x domain (XD); it reads GPASRSVIRSIIKSSRIEEDRKRYLMTLLDDIKGANDLAKFHQMLMKIIMK. The tract at residues 459-507 is interaction with the nucleocapsid (N-RNA); that stretch reads ASRSVIRSIIKSSRIEEDRKRYLMTLLDDIKGANDLAKFHQMLMKIIMK.

Belongs to the morbillivirus P protein family. Homotetramer. Interacts (via multimerization domain and XD domain) with polymerase L; this interaction forms the polymerase L-P complex. Interacts (via N-terminus) with N0 (via Ncore); this interaction allows P to chaperon N0 to avoid N polymerization and non-specific RNA binding before encapsidation. Interacts (via C-terminus) with N-RNA template (via Ntail); this interaction maintains the P/L complex anchored to the nucleocapsid template during the sequential transcription. Interacts (via C-terminus) with protein C this interaction allows C to associate with the ribonucleocapsid. Phosphorylation on serines by host CK2 is necessary for the formation of viral factories.

Essential cofactor of the RNA polymerase L that plays a central role in the transcription and replication by forming the polymerase complex with RNA polymerase L and recruiting L to the genomic N-RNA template for RNA synthesis. Also plays a central role in the encapsidation of nascent RNA chains by forming the encapsidation complex with the nucleocapsid protein N (N-P complex). Acts as a chaperone for newly synthesized free N protein, so-called N0, allowing encapsidation of nascent RNA chains during replication. The nucleoprotein protein N prevents excessive phosphorylation of P, which leads to down-regulation of viral transcription/ replication. Participates, together with N, in the formation of viral factories (viroplasms), which are large inclusions in the host cytoplasm where replication takes place. The sequence is that of Phosphoprotein (P/V) from Homo sapiens (Human).